We begin with the raw amino-acid sequence, 484 residues long: Glutamyl-tRNA(Gln) amidotransferase subunit A (484 aa).

Active-site charge relay system residues include K77 and S152. S176 serves as the catalytic Acyl-ester intermediate.

Belongs to the amidase family. GatA subfamily. As to quaternary structure, heterotrimer of A, B and C subunits.

The catalysed reaction is L-glutamyl-tRNA(Gln) + L-glutamine + ATP + H2O = L-glutaminyl-tRNA(Gln) + L-glutamate + ADP + phosphate + H(+). Functionally, allows the formation of correctly charged Gln-tRNA(Gln) through the transamidation of misacylated Glu-tRNA(Gln) in organisms which lack glutaminyl-tRNA synthetase. The reaction takes place in the presence of glutamine and ATP through an activated gamma-phospho-Glu-tRNA(Gln). In Lacticaseibacillus casei (strain BL23) (Lactobacillus casei), this protein is Glutamyl-tRNA(Gln) amidotransferase subunit A.